A 192-amino-acid chain; its full sequence is Imidazole glycerol phosphate synthase subunit HisH (192 aa).

Positions 1–192 (MIVIVDYGLG…QAIQGGFIND (192 aa)) constitute a Glutamine amidotransferase type-1 domain. Residue cysteine 77 is the Nucleophile of the active site. Catalysis depends on residues histidine 169 and glutamate 171.

As to quaternary structure, heterodimer of HisH and HisF.

The protein resides in the cytoplasm. It catalyses the reaction 5-[(5-phospho-1-deoxy-D-ribulos-1-ylimino)methylamino]-1-(5-phospho-beta-D-ribosyl)imidazole-4-carboxamide + L-glutamine = D-erythro-1-(imidazol-4-yl)glycerol 3-phosphate + 5-amino-1-(5-phospho-beta-D-ribosyl)imidazole-4-carboxamide + L-glutamate + H(+). It carries out the reaction L-glutamine + H2O = L-glutamate + NH4(+). Its pathway is amino-acid biosynthesis; L-histidine biosynthesis; L-histidine from 5-phospho-alpha-D-ribose 1-diphosphate: step 5/9. IGPS catalyzes the conversion of PRFAR and glutamine to IGP, AICAR and glutamate. The HisH subunit catalyzes the hydrolysis of glutamine to glutamate and ammonia as part of the synthesis of IGP and AICAR. The resulting ammonia molecule is channeled to the active site of HisF. This chain is Imidazole glycerol phosphate synthase subunit HisH, found in Staphylococcus aureus (strain COL).